A 200-amino-acid chain; its full sequence is Transcription factor FapR (200 aa).

Belongs to the FapR family.

Functionally, transcriptional factor involved in regulation of membrane lipid biosynthesis by repressing genes involved in fatty acid and phospholipid metabolism. The sequence is that of Transcription factor FapR from Thermoanaerobacter pseudethanolicus (strain ATCC 33223 / 39E) (Clostridium thermohydrosulfuricum).